Consider the following 344-residue polypeptide: Holliday junction branch migration complex subunit RuvB (344 aa).

Residues 1 to 180 (MSRIVSGEAQ…FGIPVRLEFY (180 aa)) are large ATPase domain (RuvB-L). The ATP site is built by Leu19, Arg20, Gly61, Lys64, Thr65, Thr66, Arg170, Tyr180, and Arg217. Thr65 contacts Mg(2+). The interval 181–251 (THDELARVLL…AAAAALARLD (71 aa)) is small ATPAse domain (RuvB-S). Positions 254–344 (EVGLDALDRR…AAPPADLFDK (91 aa)) are head domain (RuvB-H). DNA contacts are provided by Arg290, Arg309, and Arg314.

The protein belongs to the RuvB family. In terms of assembly, homohexamer. Forms an RuvA(8)-RuvB(12)-Holliday junction (HJ) complex. HJ DNA is sandwiched between 2 RuvA tetramers; dsDNA enters through RuvA and exits via RuvB. An RuvB hexamer assembles on each DNA strand where it exits the tetramer. Each RuvB hexamer is contacted by two RuvA subunits (via domain III) on 2 adjacent RuvB subunits; this complex drives branch migration. In the full resolvosome a probable DNA-RuvA(4)-RuvB(12)-RuvC(2) complex forms which resolves the HJ.

The protein resides in the cytoplasm. The catalysed reaction is ATP + H2O = ADP + phosphate + H(+). In terms of biological role, the RuvA-RuvB-RuvC complex processes Holliday junction (HJ) DNA during genetic recombination and DNA repair, while the RuvA-RuvB complex plays an important role in the rescue of blocked DNA replication forks via replication fork reversal (RFR). RuvA specifically binds to HJ cruciform DNA, conferring on it an open structure. The RuvB hexamer acts as an ATP-dependent pump, pulling dsDNA into and through the RuvAB complex. RuvB forms 2 homohexamers on either side of HJ DNA bound by 1 or 2 RuvA tetramers; 4 subunits per hexamer contact DNA at a time. Coordinated motions by a converter formed by DNA-disengaged RuvB subunits stimulates ATP hydrolysis and nucleotide exchange. Immobilization of the converter enables RuvB to convert the ATP-contained energy into a lever motion, pulling 2 nucleotides of DNA out of the RuvA tetramer per ATP hydrolyzed, thus driving DNA branch migration. The RuvB motors rotate together with the DNA substrate, which together with the progressing nucleotide cycle form the mechanistic basis for DNA recombination by continuous HJ branch migration. Branch migration allows RuvC to scan DNA until it finds its consensus sequence, where it cleaves and resolves cruciform DNA. The protein is Holliday junction branch migration complex subunit RuvB of Phenylobacterium zucineum (strain HLK1).